A 320-amino-acid polypeptide reads, in one-letter code: Cytochrome f (320 aa).

The signal sequence occupies residues 1–35 (MQTRNTFSWIREEITRSISVSLMIYIITWASISGA). Residues Tyr-36, Cys-56, Cys-59, and His-60 each coordinate heme. A helical transmembrane segment spans residues 286-306 (VQGLLFFLGSVVLAQIFLVLK).

This sequence belongs to the cytochrome f family. As to quaternary structure, the 4 large subunits of the cytochrome b6-f complex are cytochrome b6, subunit IV (17 kDa polypeptide, petD), cytochrome f and the Rieske protein, while the 4 small subunits are PetG, PetL, PetM and PetN. The complex functions as a dimer. The cofactor is heme.

The protein resides in the plastid. It localises to the chloroplast thylakoid membrane. Its function is as follows. Component of the cytochrome b6-f complex, which mediates electron transfer between photosystem II (PSII) and photosystem I (PSI), cyclic electron flow around PSI, and state transitions. The polypeptide is Cytochrome f (Capsella bursa-pastoris (Shepherd's purse)).